Consider the following 72-residue polypeptide: Translation initiation factor IF-1 1 (72 aa).

Positions 1–72 constitute an S1-like domain; sequence MAKDDVIQMQ…SRARIVFRAK (72 aa).

The protein belongs to the IF-1 family. In terms of assembly, component of the 30S ribosomal translation pre-initiation complex which assembles on the 30S ribosome in the order IF-2 and IF-3, IF-1 and N-formylmethionyl-tRNA(fMet); mRNA recruitment can occur at any time during PIC assembly.

It localises to the cytoplasm. One of the essential components for the initiation of protein synthesis. Stabilizes the binding of IF-2 and IF-3 on the 30S subunit to which N-formylmethionyl-tRNA(fMet) subsequently binds. Helps modulate mRNA selection, yielding the 30S pre-initiation complex (PIC). Upon addition of the 50S ribosomal subunit IF-1, IF-2 and IF-3 are released leaving the mature 70S translation initiation complex. The sequence is that of Translation initiation factor IF-1 1 from Ralstonia nicotianae (strain ATCC BAA-1114 / GMI1000) (Ralstonia solanacearum).